A 130-amino-acid chain; its full sequence is Fumarate reductase subunit C (130 aa).

The next 3 membrane-spanning stretches (helical) occupy residues 30–50 (EGTSIPAVWFSVLLIYGVFSL), 60–80 (FVSFLQNPLVLFLNILTLFAA), and 110–130 (IKALWVVTVVASAIILAVALL).

This sequence belongs to the FrdC family. In terms of assembly, part of an enzyme complex containing four subunits: a flavoprotein (FrdA), an iron-sulfur protein (FrdB), and two hydrophobic anchor proteins (FrdC and FrdD).

Its subcellular location is the cell inner membrane. Functionally, two distinct, membrane-bound, FAD-containing enzymes are responsible for the catalysis of fumarate and succinate interconversion; fumarate reductase is used in anaerobic growth, and succinate dehydrogenase is used in aerobic growth. Anchors the catalytic components of the fumarate reductase complex to the cell inner membrane, binds quinones. The protein is Fumarate reductase subunit C of Yersinia pestis bv. Antiqua (strain Angola).